We begin with the raw amino-acid sequence, 560 residues long: Protein AATF (560 aa).

At Ala-2 the chain carries N-acetylalanine. A phosphoserine mark is found at Ser-61 and Ser-63. The segment at 76–208 is disordered; sequence TSRKAWNEDH…GDRNSEDDGV (133 aa). Residues 94-129 are compositionally biased toward acidic residues; that stretch reads SDEEISDEEGSGDEDSEGLGLEEYDEDDLGAAEEQE. 2 positions are modified to phosphoserine: Ser-150 and Ser-155. A compositionally biased stretch (basic and acidic residues) spans 156–165; that stretch reads DFEKFTKGMD. Positions 168–195 are enriched in acidic residues; the sequence is GSSEEEEDEESGMEEGDDAEDSQGESEE. A phosphoserine mark is found at Ser-203, Ser-273, Ser-316, Ser-320, and Ser-321. Residues 273–315 are POLR2J binding; the sequence is SALKNSHKALKALLRSLVGLQEELLFQYPDTRYLVDGTKPNAG. Residues 309–333 form a disordered region; sequence GTKPNAGSEEISSEDDELVEEKKQQ. The segment at 316-372 is RB1 binding; it reads SEEISSEDDELVEEKKQQRRRVPAKRKLEMEDYPSFMAKRFADFTVYRNRTLQKWHD. An RB1 and SP1 binding region spans residues 373-472; that stretch reads KTKLASGKLG…FYHQLLRELI (100 aa).

The protein belongs to the AATF family. Part of the small subunit (SSU) processome, composed of more than 70 proteins and the RNA chaperone small nucleolar RNA (snoRNA) U3. Interacts with POLR2J, RB1/RB, RBL1/P107 and RBL2/P130. Interacts with PAWR and SP1. May also bind MAPT. Hyperphosphorylated during the G1/S phase transition. Ubiquitously expressed. Expressed at high levels in brain, heart, kidney, placenta and thymus.

It localises to the nucleus. It is found in the nucleolus. Part of the small subunit (SSU) processome, first precursor of the small eukaryotic ribosomal subunit. During the assembly of the SSU processome in the nucleolus, many ribosome biogenesis factors, an RNA chaperone and ribosomal proteins associate with the nascent pre-rRNA and work in concert to generate RNA folding, modifications, rearrangements and cleavage as well as targeted degradation of pre-ribosomal RNA by the RNA exosome. May function as a general inhibitor of the histone deacetylase HDAC1. Binding to the pocket region of RB1 may displace HDAC1 from RB1/E2F complexes, leading to activation of E2F target genes and cell cycle progression. Conversely, displacement of HDAC1 from SP1 bound to the CDKN1A promoter leads to increased expression of this CDK inhibitor and blocks cell cycle progression. Also antagonizes PAWR mediated induction of aberrant amyloid peptide production in Alzheimer disease (presenile and senile dementia), although the molecular basis for this phenomenon has not been described to date. The polypeptide is Protein AATF (Homo sapiens (Human)).